The primary structure comprises 228 residues: Cytidylate kinase (228 aa).

12 to 20 is an ATP binding site; that stretch reads GPASAGKST.

This sequence belongs to the cytidylate kinase family. Type 1 subfamily.

It is found in the cytoplasm. The catalysed reaction is CMP + ATP = CDP + ADP. It carries out the reaction dCMP + ATP = dCDP + ADP. The protein is Cytidylate kinase of Lactiplantibacillus plantarum (strain ATCC BAA-793 / NCIMB 8826 / WCFS1) (Lactobacillus plantarum).